The sequence spans 345 residues: Tropomodulin-4 (345 aa).

2 disordered regions span residues 40–64 (PENM…GPLD) and 326–345 (ARAA…QKKR). Basic and acidic residues predominate over residues 336–345 (NELRRQQKKR).

This sequence belongs to the tropomodulin family. In terms of assembly, binds to the N-terminus of tropomyosin and to actin.

The protein localises to the cytoplasm. It localises to the cytoskeleton. In terms of biological role, blocks the elongation and depolymerization of the actin filaments at the pointed end. The Tmod/TM complex contributes to the formation of the short actin protofilament, which in turn defines the geometry of the membrane skeleton. The polypeptide is Tropomodulin-4 (Tmod4) (Mus musculus (Mouse)).